The primary structure comprises 302 residues: Probable 2-(5''-triphosphoribosyl)-3'-dephosphocoenzyme-A synthase 1 (302 aa).

The protein belongs to the CitG/MdcB family.

It carries out the reaction 3'-dephospho-CoA + ATP = 2'-(5''-triphospho-alpha-D-ribosyl)-3'-dephospho-CoA + adenine. This Salmonella paratyphi A (strain ATCC 9150 / SARB42) protein is Probable 2-(5''-triphosphoribosyl)-3'-dephosphocoenzyme-A synthase 1.